Consider the following 75-residue polypeptide: uncharacterized protein (75 aa).

This is an uncharacterized protein from Treponema pallidum (strain Nichols).